The sequence spans 232 residues: Methylthioribulose-1-phosphate dehydratase (232 aa).

Cys91 contributes to the substrate binding site. Residues His109, His111, and His191 each contribute to the Zn(2+) site.

It belongs to the aldolase class II family. MtnB subfamily. Zn(2+) is required as a cofactor.

It localises to the cytoplasm. It carries out the reaction 5-(methylsulfanyl)-D-ribulose 1-phosphate = 5-methylsulfanyl-2,3-dioxopentyl phosphate + H2O. The protein operates within amino-acid biosynthesis; L-methionine biosynthesis via salvage pathway; L-methionine from S-methyl-5-thio-alpha-D-ribose 1-phosphate: step 2/6. Catalyzes the dehydration of methylthioribulose-1-phosphate (MTRu-1-P) into 2,3-diketo-5-methylthiopentyl-1-phosphate (DK-MTP-1-P). This chain is Methylthioribulose-1-phosphate dehydratase, found in Schizosaccharomyces japonicus (strain yFS275 / FY16936) (Fission yeast).